Consider the following 295-residue polypeptide: Glutamyl-Q tRNA(Asp) synthetase (295 aa).

Residues 9–13 (RFAPT) and Glu45 contribute to the L-glutamate site. The short motif at 12–22 (PTPSGFLHFGS) is the 'HIGH' region element. Residues Cys101, Cys103, Tyr115, and Cys119 each contribute to the Zn(2+) site. L-glutamate contacts are provided by Tyr172 and Arg190. The 'KMSKS' region signature appears at 228-232 (KLGKS). Residue Lys231 coordinates ATP.

The protein belongs to the class-I aminoacyl-tRNA synthetase family. GluQ subfamily. It depends on Zn(2+) as a cofactor.

Its function is as follows. Catalyzes the tRNA-independent activation of glutamate in presence of ATP and the subsequent transfer of glutamate onto a tRNA(Asp). Glutamate is transferred on the 2-amino-5-(4,5-dihydroxy-2-cyclopenten-1-yl) moiety of the queuosine in the wobble position of the QUC anticodon. This chain is Glutamyl-Q tRNA(Asp) synthetase, found in Pseudomonas entomophila (strain L48).